The chain runs to 211 residues: Imidazole glycerol phosphate synthase subunit HisH (211 aa).

The region spanning 3 to 211 (VIAVIDYDMG…VSQIKAPVLV (209 aa)) is the Glutamine amidotransferase type-1 domain. The active-site Nucleophile is the Cys-81. Active-site residues include His-186 and Glu-188.

In terms of assembly, heterodimer of HisH and HisF.

Its subcellular location is the cytoplasm. It carries out the reaction 5-[(5-phospho-1-deoxy-D-ribulos-1-ylimino)methylamino]-1-(5-phospho-beta-D-ribosyl)imidazole-4-carboxamide + L-glutamine = D-erythro-1-(imidazol-4-yl)glycerol 3-phosphate + 5-amino-1-(5-phospho-beta-D-ribosyl)imidazole-4-carboxamide + L-glutamate + H(+). It catalyses the reaction L-glutamine + H2O = L-glutamate + NH4(+). The protein operates within amino-acid biosynthesis; L-histidine biosynthesis; L-histidine from 5-phospho-alpha-D-ribose 1-diphosphate: step 5/9. In terms of biological role, IGPS catalyzes the conversion of PRFAR and glutamine to IGP, AICAR and glutamate. The HisH subunit catalyzes the hydrolysis of glutamine to glutamate and ammonia as part of the synthesis of IGP and AICAR. The resulting ammonia molecule is channeled to the active site of HisF. The polypeptide is Imidazole glycerol phosphate synthase subunit HisH (Cyanothece sp. (strain PCC 7425 / ATCC 29141)).